Consider the following 430-residue polypeptide: Adenylosuccinate synthetase (430 aa).

Residues 13–19 and 41–43 contribute to the GTP site; these read GDEGKGK and GHT. Asp14 acts as the Proton acceptor in catalysis. Mg(2+) contacts are provided by Asp14 and Gly41. IMP contacts are provided by residues 14 to 17, 39 to 42, Thr130, Arg144, Gln225, Thr240, and Arg304; these read DEGK and NAGH. Residue His42 is the Proton donor of the active site. 300–306 serves as a coordination point for substrate; that stretch reads ASTGRPR. Residues Arg306, 332-334, and 414-416 each bind GTP; these read KLD and STG.

Belongs to the adenylosuccinate synthetase family. In terms of assembly, homodimer. Mg(2+) serves as cofactor.

It localises to the cytoplasm. It carries out the reaction IMP + L-aspartate + GTP = N(6)-(1,2-dicarboxyethyl)-AMP + GDP + phosphate + 2 H(+). The protein operates within purine metabolism; AMP biosynthesis via de novo pathway; AMP from IMP: step 1/2. Its function is as follows. Plays an important role in the de novo pathway of purine nucleotide biosynthesis. Catalyzes the first committed step in the biosynthesis of AMP from IMP. In Xylella fastidiosa (strain M12), this protein is Adenylosuccinate synthetase.